The following is a 600-amino-acid chain: Adenine deaminase (600 aa).

It belongs to the metallo-dependent hydrolases superfamily. Adenine deaminase family. The cofactor is Mn(2+).

The catalysed reaction is adenine + H2O + H(+) = hypoxanthine + NH4(+). The sequence is that of Adenine deaminase from Roseobacter denitrificans (strain ATCC 33942 / OCh 114) (Erythrobacter sp. (strain OCh 114)).